The following is a 113-amino-acid chain: MVEEHRDVIYVTSNYVPGYRAVEVLGFVYGLTVRSRRLGGQIDRFKSILGGEIKEYVTMMEHSRQEALERMLDHARELGANAVISVRFDSDSISDIMQEILAYGTAVIVEPEE.

Belongs to the UPF0145 family.

This Methanothermobacter thermautotrophicus (strain ATCC 29096 / DSM 1053 / JCM 10044 / NBRC 100330 / Delta H) (Methanobacterium thermoautotrophicum) protein is UPF0145 protein MTH_544.